We begin with the raw amino-acid sequence, 119 residues long: Large ribosomal subunit protein bL19 (119 aa).

This sequence belongs to the bacterial ribosomal protein bL19 family.

This protein is located at the 30S-50S ribosomal subunit interface and may play a role in the structure and function of the aminoacyl-tRNA binding site. The polypeptide is Large ribosomal subunit protein bL19 (Arthrobacter sp. (strain FB24)).